The following is a 549-amino-acid chain: Mitogen-activated protein kinase 15 (549 aa).

The interval methionine 1–leucine 20 is ubiquitin-conjugating. The region spanning tyrosine 14 to valine 305 is the Protein kinase domain. ATP contacts are provided by residues leucine 20–valine 28 and lysine 43. Aspartate 138 (proton acceptor) is an active-site residue. Threonine 176 is subject to Phosphothreonine. Positions threonine 176 to tyrosine 178 match the TXY motif. Tyrosine 178 is subject to Phosphotyrosine. A necessary to interact with ESRRA, to regulate its subcellular localization and to inhibit its transcriptional activity region spans residues leucine 266–leucine 286. The tract at residues glutamine 301 to valine 382 is requires for interaction with GABARAP, MAP1LC3B AND GABARAPL1. The segment at alanine 370–phenylalanine 507 is disordered. PXXXP motif repeat units lie at residues serine 380 to proline 384 and proline 387 to proline 391. PXXXP motif; regulates binding with chromatin and interaction with PCNA repeat units follow at residues arginine 395–proline 399 and proline 403–proline 407. Basic and acidic residues predominate over residues proline 403–serine 416. Residue arginine 451 is modified to Omega-N-methylarginine. Residues serine 456 to asparagine 467 show a composition bias toward polar residues. A compositionally biased stretch (low complexity) spans alanine 483–arginine 492. Positions leucine 493 to proline 502 are enriched in basic and acidic residues.

The protein belongs to the protein kinase superfamily. CMGC Ser/Thr protein kinase family. MAP kinase subfamily. In terms of assembly, interacts with TGFB1I1. Interacts with CSK/c-Src, ABL1 and RET. Interacts with GABARAP, MAP1LC3B and GABARAPL1; controls, in a kinase-dependent fashion, both basal and starvation-induced autophagy. Interacts with ESRRA; promotes re-localization of ESRRA to the cytoplasm through a XPO1-dependent mechanism then inhibits ESRRA transcriptional activity. Interacts with PCNA; the interaction is chromatin binding- and kinase activity-dependent and prevents MDM2-mediated PCNA destruction by inhibiting the association of PCNA with MDM2. Interacts with DVL2. Interacts with CLIC3; MAPK15 does not phosphorylates CLIC3. Post-translationally, autophosphorylated on Thr-176 and Tyr-178; activates the enzyme. In terms of processing, ubiquitinated. Ubiquitination may allow its tight kinase activity regulation and rapid turnover. May be ubiquitinated by a SCF E3 ligase. Expressed at all stages of oocyte meiotic maturation.

It is found in the cytoplasm. The protein localises to the cytoskeleton. Its subcellular location is the cilium basal body. The protein resides in the cell junction. It localises to the tight junction. It is found in the microtubule organizing center. The protein localises to the centrosome. Its subcellular location is the centriole. The protein resides in the cytoplasmic vesicle. It localises to the autophagosome. It is found in the golgi apparatus. The protein localises to the nucleus. Its subcellular location is the spindle. The catalysed reaction is L-seryl-[protein] + ATP = O-phospho-L-seryl-[protein] + ADP + H(+). It carries out the reaction L-threonyl-[protein] + ATP = O-phospho-L-threonyl-[protein] + ADP + H(+). Activated by threonine and tyrosine phosphorylation. Inhibited by dual specificity phosphatases, such as DUSP1. Phosphorylation and activation in response to DNA damaging agents, serum stimulation. Constitutively activated when phosphorylated on Tyr-178. Activity depends on the relative rates of MAPK15 autophosphorylation and dephosphorylation by PTPN1. In terms of biological role, atypical MAPK protein that regulates several process such as autophagy, ciliogenesis, protein trafficking/secretion and genome integrity, in a kinase activity-dependent manner. Controls both, basal and starvation-induced autophagy throught its interaction with GABARAP, MAP1LC3B and GABARAPL1 leading to autophagosome formation, SQSTM1 degradation and reduced MAP1LC3B inhibitory phosphorylation. Regulates primary cilium formation and the localization of ciliary proteins involved in cilium structure, transport, and signaling. Prevents the relocation of the sugar-adding enzymes from the Golgi to the endoplasmic reticulum, thereby restricting the production of sugar-coated proteins. Upon amino-acid starvation, mediates transitional endoplasmic reticulum site disassembly and inhibition of secretion. Binds to chromatin leading to MAPK15 activation and interaction with PCNA, that which protects genomic integrity by inhibiting MDM2-mediated degradation of PCNA. Regulates DA transporter (DAT) activity and protein expression via activation of RhoA. In response to H(2)O(2) treatment phosphorylates ELAVL1, thus preventing it from binding to the PDCD4 3'UTR and rendering the PDCD4 mRNA accessible to miR-21 and leading to its degradation and loss of protein expression. Also functions in a kinase activity-independent manner as a negative regulator of growth. Phosphorylates in vitro FOS and MBP. During oocyte maturation, plays a key role in the microtubule organization and meiotic cell cycle progression in oocytes, fertilized eggs, and early embryos. Interacts with ESRRA promoting its re-localization from the nucleus to the cytoplasm and then prevents its transcriptional activity. The protein is Mitogen-activated protein kinase 15 of Mus musculus (Mouse).